Reading from the N-terminus, the 280-residue chain is 2-dehydro-3-deoxyphosphooctonate aldolase (280 aa).

Belongs to the KdsA family.

The protein localises to the cytoplasm. The enzyme catalyses D-arabinose 5-phosphate + phosphoenolpyruvate + H2O = 3-deoxy-alpha-D-manno-2-octulosonate-8-phosphate + phosphate. It functions in the pathway carbohydrate biosynthesis; 3-deoxy-D-manno-octulosonate biosynthesis; 3-deoxy-D-manno-octulosonate from D-ribulose 5-phosphate: step 2/3. It participates in bacterial outer membrane biogenesis; lipopolysaccharide biosynthesis. This is 2-dehydro-3-deoxyphosphooctonate aldolase from Neisseria meningitidis serogroup A / serotype 4A (strain DSM 15465 / Z2491).